We begin with the raw amino-acid sequence, 157 residues long: uncharacterized protein (157 aa).

This is an uncharacterized protein from Saccharomyces cerevisiae (strain ATCC 204508 / S288c) (Baker's yeast).